Here is a 140-residue protein sequence, read N- to C-terminus: Large ribosomal subunit protein uL11 (140 aa).

Belongs to the universal ribosomal protein uL11 family. In terms of assembly, part of the ribosomal stalk of the 50S ribosomal subunit. Interacts with L10 and the large rRNA to form the base of the stalk. L10 forms an elongated spine to which L12 dimers bind in a sequential fashion forming a multimeric L10(L12)X complex. In terms of processing, one or more lysine residues are methylated.

Functionally, forms part of the ribosomal stalk which helps the ribosome interact with GTP-bound translation factors. The sequence is that of Large ribosomal subunit protein uL11 from Solidesulfovibrio magneticus (strain ATCC 700980 / DSM 13731 / RS-1) (Desulfovibrio magneticus).